A 159-amino-acid chain; its full sequence is Immunoglobulin J chain (159 aa).

An N-terminal signal peptide occupies residues 1-22 (MKNHLLFWGVLAVFIKAVHVKA). Q23 bears the Pyrrolidone carboxylic acid mark. Disulfide bonds link C35–C123, C94–C114, and C131–C156. A glycan (N-linked (GlcNAc...) (complex) asparagine) is linked at N71.

In terms of assembly, part of the secretory IgA (sIgA) complex that consists of two, four or five IgA monomers, and two additional non-Ig polypeptides, namely the JCHAIN and the secretory component (the proteolytic product of PIGR). Part of the secretory IgM (sIgM) complex that consists of five IgM monomers, and two additional non-Ig polypeptides, namely the JCHAIN and the secretory component (the proteolytic product of PIGR). JCHAIN-containing IgM interacts (via CH4 domain) with FCRM (via Ig-like domain).

It localises to the secreted. In terms of biological role, serves to link two monomer units of either IgM or IgA. In the case of IgM, the J chain-joined dimer is a nucleating unit for the IgM pentamer, and in the case of IgA it induces dimers and/or larger polymers. It also helps to bind these immunoglobulins to secretory component. This is Immunoglobulin J chain from Homo sapiens (Human).